The chain runs to 323 residues: Glutathione synthetase (323 aa).

The ATP-grasp domain maps to 133–317 (KMYALQFQSV…IGDQTIAALE (185 aa)). ATP is bound at residue 159–215 (LDELRAAVLKPLGGKAGEGILFLDPGDRNFNSLVEISTQQGQLPVMVQQYLPEAKDG). Residues Glu-288 and Asn-290 each contribute to the Mg(2+) site.

The protein belongs to the prokaryotic GSH synthase family. Requires Mg(2+) as cofactor. Mn(2+) is required as a cofactor.

It carries out the reaction gamma-L-glutamyl-L-cysteine + glycine + ATP = glutathione + ADP + phosphate + H(+). It participates in sulfur metabolism; glutathione biosynthesis; glutathione from L-cysteine and L-glutamate: step 2/2. This Synechococcus elongatus (strain ATCC 33912 / PCC 7942 / FACHB-805) (Anacystis nidulans R2) protein is Glutathione synthetase.